We begin with the raw amino-acid sequence, 114 residues long: Nascent polypeptide-associated complex protein (114 aa).

The NAC-A/B domain occupies 5 to 69 (PSQFKNLERM…AKEAQKEEPK (65 aa)).

It belongs to the NAC-alpha family. In terms of assembly, homodimer. Interacts with the ribosome. Binds ribosomal RNA.

Functionally, contacts the emerging nascent chain on the ribosome. This chain is Nascent polypeptide-associated complex protein, found in Sulfurisphaera tokodaii (strain DSM 16993 / JCM 10545 / NBRC 100140 / 7) (Sulfolobus tokodaii).